Here is a 116-residue protein sequence, read N- to C-terminus: Putative pterin-4-alpha-carbinolamine dehydratase (116 aa).

Belongs to the pterin-4-alpha-carbinolamine dehydratase family.

The catalysed reaction is (4aS,6R)-4a-hydroxy-L-erythro-5,6,7,8-tetrahydrobiopterin = (6R)-L-erythro-6,7-dihydrobiopterin + H2O. In Microcystis aeruginosa (strain NIES-843 / IAM M-2473), this protein is Putative pterin-4-alpha-carbinolamine dehydratase.